Reading from the N-terminus, the 628-residue chain is ATP-dependent zinc metalloprotease FtsH (628 aa).

The Stromal portion of the chain corresponds to 1-7; it reads MKLSWKT. Residues 8-28 traverse the membrane as a helical segment; that stretch reads LLLWSLPIFVVGFFFWQGFLG. The Lumenal segment spans residues 29-118; that stretch reads PTTTDVGSNI…AHPPKSTSAV (90 aa). The helical transmembrane segment at 119–139 threads the bilayer; it reads WGLLGNLLFPLILVGGLAFLF. Residues 140–628 are Stromal-facing; the sequence is RRSNNASGGP…PEKNYYISQF (489 aa). Position 213–220 (213–220) interacts with ATP; that stretch reads GPPGTGKT. His-434 provides a ligand contact to Zn(2+). Glu-435 is a catalytic residue. Residues His-438 and Asp-512 each contribute to the Zn(2+) site.

In the central section; belongs to the AAA ATPase family. This sequence in the C-terminal section; belongs to the peptidase M41 family. In terms of assembly, homohexamer. The cofactor is Zn(2+).

The protein resides in the plastid. The protein localises to the chloroplast thylakoid membrane. Functionally, acts as a processive, ATP-dependent zinc metallopeptidase. The polypeptide is ATP-dependent zinc metalloprotease FtsH (Porphyra purpurea (Red seaweed)).